The primary structure comprises 369 residues: Cyclin-dependent kinase 5 activator 2 (369 aa).

Residues 1–11 show a composition bias toward polar residues; sequence MGTVLSLSPAS. 3 disordered regions span residues 1 to 55, 72 to 176, and 330 to 369; these read MGTV…SRLK, ASAK…SPRR, and EAAASTGGPPSGSSASTTSSSSARDSCATGAKHWTMNLDR. G2 carries the N-myristoyl glycine lipid modification. Basic residues predominate over residues 74-84; that stretch reads AKKKKGSKKVT. Residue T84 is modified to Phosphothreonine. Positions 99-112 are enriched in basic and acidic residues; that stretch reads RNRENLLRKGRDGP. The span at 122–144 shows a compositional bias: low complexity; that stretch reads AVPVPTVPTTAATCEPPSGGSAA. A compositionally biased stretch (pro residues) spans 145–171; sequence APPPGSGGGKPPPPPPPAPQAAPPAPG. Low complexity predominate over residues 331-352; it reads AAASTGGPPSGSSASTTSSSSA.

The protein belongs to the cyclin-dependent kinase 5 activator family. As to quaternary structure, heterodimer of a catalytic subunit and a regulatory subunit. Myristoylated. The Gly-2-Ala mutant is absent of the cell periphery, suggesting that a proper myristoylation signal is essential for the proper distribution of CDK5R2 (p39).

The protein localises to the cell membrane. Its function is as follows. Activator of CDK5/TPKII. The sequence is that of Cyclin-dependent kinase 5 activator 2 (Cdk5r2) from Mus musculus (Mouse).